Here is a 95-residue protein sequence, read N- to C-terminus: MDKRHTIMLIAVAVIAIAPLVIYSGLGEDQGYFGGADDSASKAISETGYKPWFQPIWEPPSGEIESLLFALQAAIGALIIGYVFGYYRGRGESPE.

Transmembrane regions (helical) follow at residues 7 to 27 and 67 to 87; these read IMLI…SGLG and LLFA…FGYY.

Belongs to the CbiN family. Forms an energy-coupling factor (ECF) transporter complex composed of an ATP-binding protein (A component, CbiO), a transmembrane protein (T component, CbiQ) and 2 possible substrate-capture proteins (S components, CbiM and CbiN) of unknown stoichimetry.

The protein resides in the cell membrane. The protein operates within cofactor biosynthesis; adenosylcobalamin biosynthesis. In terms of biological role, part of the energy-coupling factor (ECF) transporter complex CbiMNOQ involved in cobalt import. The polypeptide is Cobalt transport protein CbiN (Methanothermobacter marburgensis (strain ATCC BAA-927 / DSM 2133 / JCM 14651 / NBRC 100331 / OCM 82 / Marburg) (Methanobacterium thermoautotrophicum)).